The following is a 96-amino-acid chain: 2Fe-2S ferredoxin-5 (96 aa).

One can recognise a 2Fe-2S ferredoxin-type domain in the interval 2-96 (PKVIVANINA…GKGDVVIYLP (95 aa)). [2Fe-2S] cluster is bound by residues C36, C42, C45, and C81.

This sequence belongs to the adrenodoxin/putidaredoxin family. It depends on [2Fe-2S] cluster as a cofactor.

Its function is as follows. May be involved in the assembly of iron-sulfur clusters (Isc-Fd). In Aquifex aeolicus (strain VF5), this protein is 2Fe-2S ferredoxin-5 (fdx5).